The sequence spans 420 residues: O-methyltransferase opaF (420 aa).

S-adenosyl-L-methionine is bound by residues 262–263 (GG), Asp-287, and 308–309 (DL). His-328 serves as the catalytic Proton acceptor.

It belongs to the class I-like SAM-binding methyltransferase superfamily. Cation-independent O-methyltransferase family.

Its pathway is secondary metabolite biosynthesis. O-methyltransferase; part of the gene cluster that mediates the biosynthesis of oxepinamides, derivatives of anthranilyl-containing tripeptides that share an oxepin ring and a fused pyrimidinone moiety. The nonribosomal peptide synthetase (NRPS) opaA assembles the quinazolinone core with D-Phe incorporation. The first adenylation domain (A1) of opaA loads and activates anthranilic acid whereas the second A domain (A2) is for activating of L-Phe, which is then converted to D-form by the E domain. The third A domain (A3) is responsible for L-Ile activation and the terminal condensation domain C3 for cyclization and releasing the NRPS product protuboxepin K. The cytochrome P450 monooxygenase opaB then catalyzes alone the oxepin ring formation to convert protuboxepin K into protuboxepin A. The flavoenzyme opaC installs subsequently one hydroxyl group at the oxepin ring, accompanied by double bond migration, to form 15-epi-oxepinamide E. The epimerase opaE changes the D-Phe residue back to L-form, leading to oxepinamide E, which is further methylated at the hydroxyl group at C-12 by the O-methyltransferase OpaF to yield oxepinamide F. This chain is O-methyltransferase opaF, found in Aspergillus ustus.